The primary structure comprises 208 residues: Inosine triphosphate pyrophosphatase (208 aa).

Alanine 2 carries the N-acetylalanine modification. Residue threonine 14–lysine 19 coordinates ITP. Residue glutamate 44 participates in Mg(2+) binding. Residues lysine 56, aspartate 72–threonine 73, lysine 89, phenylalanine 149–aspartate 152, lysine 172, and histidine 177–arginine 178 contribute to the ITP site.

The protein belongs to the HAM1 NTPase family. Homodimer. Mg(2+) is required as a cofactor. It depends on Mn(2+) as a cofactor.

It localises to the cytoplasm. It carries out the reaction ITP + H2O = IMP + diphosphate + H(+). The catalysed reaction is dITP + H2O = dIMP + diphosphate + H(+). The enzyme catalyses XTP + H2O = XMP + diphosphate + H(+). It catalyses the reaction N(6)-hydroxy-dATP + H2O = N(6)-hydroxy-dAMP + diphosphate + H(+). In terms of biological role, pyrophosphatase that hydrolyzes the non-canonical purine nucleotides inosine triphosphate (ITP), deoxyinosine triphosphate (dITP) as well as 2'-deoxy-N-6-hydroxylaminopurine triphosphate (dHAPTP) and xanthosine 5'-triphosphate (XTP) to their respective monophosphate derivatives. The enzyme does not distinguish between the deoxy- and ribose forms. Probably excludes non-canonical purines from RNA and DNA precursor pools, thus preventing their incorporation into RNA and DNA and avoiding chromosomal lesions. This Bos taurus (Bovine) protein is Inosine triphosphate pyrophosphatase.